The primary structure comprises 291 residues: MLEGQIIKALSGFYYVFSEGKVYQCRARGNFRKRNISPLVGDDVEFQIENKTDGYILDVMSRENALVRPPVANIDIAILVFSAVEPDFSTNLADRFLVAIEKEDIKPVICISKMDLASESEKEQIAVYKDIYEAIGYDVFVTNDEPDKEAIKDYISGKTAVIAGQSGVGKSTLLNSLNSDLTLKTAEISNALGRGKHTTRHVELMPIGDGFVADTPGFSSIEWDDLQPETLQFCFPEMEDRRSGCKFRGCMHDNEPNCAVKTAVEANEIAEFRYKHYIQILQELKNRKPRY.

The CP-type G domain occupies 63 to 221; that stretch reads ENALVRPPVA…VADTPGFSSI (159 aa). GTP-binding positions include 112–115 and 164–172; these read SKMD and GQSGVGKST. Zn(2+) contacts are provided by cysteine 245, cysteine 250, histidine 252, and cysteine 258.

The protein belongs to the TRAFAC class YlqF/YawG GTPase family. RsgA subfamily. In terms of assembly, monomer. Associates with 30S ribosomal subunit, binds 16S rRNA. The cofactor is Zn(2+).

It localises to the cytoplasm. Functionally, one of several proteins that assist in the late maturation steps of the functional core of the 30S ribosomal subunit. Helps release RbfA from mature subunits. May play a role in the assembly of ribosomal proteins into the subunit. Circularly permuted GTPase that catalyzes slow GTP hydrolysis, GTPase activity is stimulated by the 30S ribosomal subunit. In Listeria monocytogenes serotype 4b (strain F2365), this protein is Small ribosomal subunit biogenesis GTPase RsgA 1.